Here is a 126-residue protein sequence, read N- to C-terminus: Urease subunit beta (126 aa).

The protein belongs to the urease beta subunit family. As to quaternary structure, heterotrimer of UreA (gamma), UreB (beta) and UreC (alpha) subunits. Three heterotrimers associate to form the active enzyme.

Its subcellular location is the cytoplasm. It carries out the reaction urea + 2 H2O + H(+) = hydrogencarbonate + 2 NH4(+). The protein operates within nitrogen metabolism; urea degradation; CO(2) and NH(3) from urea (urease route): step 1/1. The polypeptide is Urease subunit beta (Sporosarcina pasteurii (Bacillus pasteurii)).